We begin with the raw amino-acid sequence, 604 residues long: Structure-specific endonuclease subunit MUS81 (604 aa).

Disordered regions lie at residues 93-138 (AAVH…REYV), 227-248 (KLDSEETGTRHEDVDSQDGQNV), and 253-272 (LEEEDEDEEKESWSSERPAV). 2 stretches are compositionally biased toward basic and acidic residues: residues 116–128 (EHTKLTQKEVRKE) and 227–240 (KLDSEETGTRHEDV). The winged helix domain (WHD); critical for endonuclease activity stretch occupies residues 138 to 254 (VPQKRSGGYA…GQNVVDLTLE (117 aa)). Over residues 253-262 (LEEEDEDEEK) the composition is skewed to acidic residues. The 110-residue stretch at 314 to 423 (VLCVDLCETT…KPIYLVEECG (110 aa)) folds into the ERCC4 domain. Catalysis depends on residues Asp318, Glu321, and Asp353. Mg(2+)-binding residues include Asp318, Glu321, Asp353, Glu384, and Arg385. Residues 524–598 (VREVFARQLM…LSRTIYQLYC (75 aa)) form a helix-hairpin-helix (2HhH); involved in DNA recognition and bending region.

Belongs to the XPF family. In terms of assembly, part of the heterodimeric DNA structure-specific endonuclease complex MUS81-EME1. Part of the heterodimeric DNA structure-specific endonuclease complex MUS81-EME2. Mg(2+) is required as a cofactor.

The protein localises to the nucleus. Its subcellular location is the nucleolus. Its function is as follows. Catalytic subunit of two functionally distinct, structure-specific, heterodimeric DNA endonucleases MUS81-EME1 and MUS81-EME2 that are involved in the maintenance of genome stability. Both endonucleases have essentially the same substrate specificity though MUS81-EME2 is more active than its MUS81-EME1 counterpart. Both cleave 3'-flaps and nicked Holliday junctions, and exhibit limited endonuclease activity with 5' flaps and nicked double-stranded DNAs. MUS81-EME2 which is active during the replication of DNA is more specifically involved in replication fork processing. Replication forks frequently encounter obstacles to their passage, including DNA base lesions, DNA interstrand cross-links, difficult-to-replicate sequences, transcription bubbles, or tightly bound proteins. One mechanism for the restart of a stalled replication fork involves nucleolytic cleavage mediated by the MUS81-EME2 endonuclease. By acting upon the stalled fork, MUS81-EME2 generates a DNA double-strand break (DSB) that can be repaired by homologous recombination, leading to the restoration of an active fork. MUS81-EME2 could also function in telomere maintenance. MUS81-EME1, on the other hand, is active later in the cell cycle and functions in the resolution of mitotic recombination intermediates including the Holliday junctions, the four-way DNA intermediates that form during homologous recombination. This is Structure-specific endonuclease subunit MUS81 (mus81) from Danio rerio (Zebrafish).